The primary structure comprises 314 residues: Methionyl-tRNA formyltransferase (314 aa).

110 to 113 (SLLP) is a (6S)-5,6,7,8-tetrahydrofolate binding site.

It belongs to the Fmt family.

It carries out the reaction L-methionyl-tRNA(fMet) + (6R)-10-formyltetrahydrofolate = N-formyl-L-methionyl-tRNA(fMet) + (6S)-5,6,7,8-tetrahydrofolate + H(+). Attaches a formyl group to the free amino group of methionyl-tRNA(fMet). The formyl group appears to play a dual role in the initiator identity of N-formylmethionyl-tRNA by promoting its recognition by IF2 and preventing the misappropriation of this tRNA by the elongation apparatus. The sequence is that of Methionyl-tRNA formyltransferase from Bacillus cereus (strain ATCC 14579 / DSM 31 / CCUG 7414 / JCM 2152 / NBRC 15305 / NCIMB 9373 / NCTC 2599 / NRRL B-3711).